We begin with the raw amino-acid sequence, 137 residues long: Large ribosomal subunit protein uL16 (137 aa).

This sequence belongs to the universal ribosomal protein uL16 family. In terms of assembly, part of the 50S ribosomal subunit.

Functionally, binds 23S rRNA and is also seen to make contacts with the A and possibly P site tRNAs. The protein is Large ribosomal subunit protein uL16 of Pseudomonas putida (strain ATCC 47054 / DSM 6125 / CFBP 8728 / NCIMB 11950 / KT2440).